The sequence spans 441 residues: MRISSTLLQRSKQLIDKYALYVPKTGSFPKGFEVGYTASGVKKNGSLDLGVILNTNKSRPSTAAAVFTTNKFKAAPVLTSKKVLETARGKNINAIVVNSGCANSVTGDLGMKDAQVMIDLVNDKIGQKNSTLVMSTGVIGQRLQMDKISTGINKIFGEEKFGSDFNSWLNVAKSICTTDTFPKLVTSRFKLPSGTEYTLTGMAKGAGMICPNMATLLGFIVTDLPIESKALQKMLTFATTRSFNCISVDGDMSTNDTICMLANGAIDTKEINEDSKDFEQVKLQVTEFAQRLAQLVVRDGEGSTKFVTVNVKNALHFEDAKIIAESISNSMLVKTALYGQDANWGRILCAIGYAKLNDLKSLDVNKINVSFIATDNSEPRELKLVANGVPQLEIDETRASEILALNDLEVSVDLGTGDQAAQFWTCDLSHEYVTINGDYRS.

The N-terminal 8 residues, 1-8 (MRISSTLL), are a transit peptide targeting the mitochondrion. Thr177, Lys204, Thr215, Glu301, Asn436, and Ser441 together coordinate substrate. Thr215 functions as the Nucleophile in the catalytic mechanism.

Belongs to the ArgJ family. In terms of assembly, heterodimer of an alpha and a beta chain. In terms of processing, the alpha and beta chains are autoproteolytically processed from a single precursor protein within the mitochondrion.

It localises to the mitochondrion matrix. It carries out the reaction N(2)-acetyl-L-ornithine + L-glutamate = N-acetyl-L-glutamate + L-ornithine. It catalyses the reaction L-glutamate + acetyl-CoA = N-acetyl-L-glutamate + CoA + H(+). The protein operates within amino-acid biosynthesis; L-arginine biosynthesis; L-ornithine and N-acetyl-L-glutamate from L-glutamate and N(2)-acetyl-L-ornithine (cyclic): step 1/1. Its pathway is amino-acid biosynthesis; L-arginine biosynthesis; N(2)-acetyl-L-ornithine from L-glutamate: step 1/4. With respect to regulation, inhibited by ornithine. Its function is as follows. Catalyzes two activities which are involved in the cyclic version of arginine biosynthesis: the synthesis of acetylglutamate from glutamate and acetyl-CoA, and of ornithine by transacetylation between acetylornithine and glutamate. This is Arginine biosynthesis bifunctional protein ArgJ, mitochondrial from Saccharomyces cerevisiae (strain ATCC 204508 / S288c) (Baker's yeast).